Reading from the N-terminus, the 567-residue chain is Septation ring formation regulator EzrA (567 aa).

Residues 1 to 2 (ME) are Extracellular-facing. A helical transmembrane segment spans residues 3–21 (IAVIVLLLLGGVMIYNHVY). Over 22-567 (RKKMYSEIDR…IFRDERSKEE (546 aa)) the chain is Cytoplasmic. Coiled-coil stretches lie at residues 97 to 188 (RYAK…LTAS) and 254 to 465 (REIV…LEEK).

Belongs to the EzrA family.

The protein resides in the cell membrane. Negative regulator of FtsZ ring formation; modulates the frequency and position of FtsZ ring formation. Inhibits FtsZ ring formation at polar sites. Interacts either with FtsZ or with one of its binding partners to promote depolymerization. In Geobacillus sp. (strain WCH70), this protein is Septation ring formation regulator EzrA.